The primary structure comprises 210 residues: Chaperone protein TorD (210 aa).

This sequence belongs to the TorD/DmsD family. TorD subfamily.

The protein resides in the cytoplasm. In terms of biological role, involved in the biogenesis of TorA. Acts on TorA before the insertion of the molybdenum cofactor and, as a result, probably favors a conformation of the apoenzyme that is competent for acquiring the cofactor. This chain is Chaperone protein TorD, found in Salmonella agona (strain SL483).